The chain runs to 605 residues: UvrABC system protein C (605 aa).

Residues 14–92 (QSCGVYKMVG…IKSLKPLYNI (79 aa)) form the GIY-YIG domain. One can recognise a UVR domain in the interval 202–237 (KEVKEQLLFTMRKCSSEENYELAAIYRDRVKFLEQI).

This sequence belongs to the UvrC family. Interacts with UvrB in an incision complex.

Its subcellular location is the cytoplasm. In terms of biological role, the UvrABC repair system catalyzes the recognition and processing of DNA lesions. UvrC both incises the 5' and 3' sides of the lesion. The N-terminal half is responsible for the 3' incision and the C-terminal half is responsible for the 5' incision. This Wolbachia pipientis wMel protein is UvrABC system protein C.